Reading from the N-terminus, the 629-residue chain is DNA mismatch repair protein MutL (629 aa).

Belongs to the DNA mismatch repair MutL/HexB family.

Its function is as follows. This protein is involved in the repair of mismatches in DNA. It is required for dam-dependent methyl-directed DNA mismatch repair. May act as a 'molecular matchmaker', a protein that promotes the formation of a stable complex between two or more DNA-binding proteins in an ATP-dependent manner without itself being part of a final effector complex. The sequence is that of DNA mismatch repair protein MutL from Haemophilus influenzae (strain 86-028NP).